The sequence spans 56 residues: MAKADYNKRKPRKFGKGARRCIRCGQYGPIIRIHGLMLCRHCFREVAPKLGFRKYE.

The Zn(2+) site is built by cysteine 21, cysteine 24, cysteine 39, and cysteine 42.

This sequence belongs to the universal ribosomal protein uS14 family. Zinc-binding uS14 subfamily. Part of the 30S ribosomal subunit. It depends on Zn(2+) as a cofactor.

In terms of biological role, binds 16S rRNA, required for the assembly of 30S particles. The chain is Small ribosomal subunit protein uS14 from Pyrococcus abyssi (strain GE5 / Orsay).